The chain runs to 324 residues: Methenyltetrahydromethanopterin cyclohydrolase (324 aa).

This sequence belongs to the MCH family.

It localises to the cytoplasm. The enzyme catalyses 5,10-methenyl-5,6,7,8-tetrahydromethanopterin + H2O = N(5)-formyl-5,6,7,8-tetrahydromethanopterin + H(+). The protein operates within one-carbon metabolism; formaldehyde degradation; formate from formaldehyde (H(4)MPT route): step 3/5. In terms of biological role, catalyzes the hydrolysis of methenyl-H(4)MPT(+) to 5-formyl-H(4)MPT. The polypeptide is Methenyltetrahydromethanopterin cyclohydrolase (Methylobacterium nodulans (strain LMG 21967 / CNCM I-2342 / ORS 2060)).